The following is a 138-amino-acid chain: Histone H2B.8 (138 aa).

Residues 1–38 show a composition bias toward basic and acidic residues; sequence MAPKAAEKKPAGKKPAEKAPAEKLPKAEKKITKEGGSE. The segment at 1–45 is disordered; the sequence is MAPKAAEKKPAGKKPAEKAPAEKLPKAEKKITKEGGSEKKKKKSK. Residue Ala2 is modified to N,N,N-trimethylalanine; alternate. The residue at position 2 (Ala2) is a N,N-dimethylalanine; alternate. Residue Ala2 is modified to N-methylalanine; alternate. Lys4 carries the N6-methyllysine modification. Lys8 and Lys13 each carry N6-acetyllysine. At Lys14 the chain carries N6,N6-dimethyllysine. N6-acetyllysine occurs at positions 18, 23, 29, and 30. Residue Lys134 forms a Glycyl lysine isopeptide (Lys-Gly) (interchain with G-Cter in ubiquitin) linkage.

It belongs to the histone H2B family. The nucleosome is a histone octamer containing two molecules each of H2A, H2B, H3 and H4 assembled in one H3-H4 heterotetramer and two H2A-H2B heterodimers. The octamer wraps approximately 147 bp of DNA. Can be acetylated to form H2BK6ac, H2BK33ac and H2BK34ac. Post-translationally, monoubiquitinated by BRE1 to form H2BK143ub1 and deubiquitinated by UBP26. Required for heterochromatic histone H3 di- and trimethylation at H3K4me. May give a specific tag for epigenetic transcriptional activation.

The protein resides in the nucleus. The protein localises to the chromosome. Core component of nucleosome. Nucleosomes wrap and compact DNA into chromatin, limiting DNA accessibility to the cellular machineries which require DNA as a template. Histones thereby play a central role in transcription regulation, DNA repair, DNA replication and chromosomal stability. DNA accessibility is regulated via a complex set of post-translational modifications of histones, also called histone code, and nucleosome remodeling. This is Histone H2B.8 from Arabidopsis thaliana (Mouse-ear cress).